Reading from the N-terminus, the 283-residue chain is Endochitinase At2g43620 (283 aa).

The signal sequence occupies residues methionine 1–serine 28. The 38-residue stretch at glutamine 29–serine 66 folds into the Chitin-binding type-1 domain. Cystine bridges form between cysteine 31/cysteine 42, cysteine 36/cysteine 48, cysteine 41/cysteine 55, and cysteine 59/cysteine 64. The segment at aspartate 88–cysteine 283 is catalytic. Glutamate 150 acts as the Proton donor in catalysis. An N-linked (GlcNAc...) asparagine glycan is attached at asparagine 280.

The protein belongs to the glycosyl hydrolase 19 family. Chitinase class I subfamily.

The enzyme catalyses Random endo-hydrolysis of N-acetyl-beta-D-glucosaminide (1-&gt;4)-beta-linkages in chitin and chitodextrins.. This chain is Endochitinase At2g43620, found in Arabidopsis thaliana (Mouse-ear cress).